Here is a 699-residue protein sequence, read N- to C-terminus: Elongation factor G (699 aa).

The 282-residue stretch at 8-289 folds into the tr-type G domain; that stretch reads ERYRNIGISA…AVVEYMPAPT (282 aa). GTP is bound by residues 17–24, 88–92, and 142–145; these read AHIDAGKT, DTPGH, and NKMD.

This sequence belongs to the TRAFAC class translation factor GTPase superfamily. Classic translation factor GTPase family. EF-G/EF-2 subfamily.

The protein localises to the cytoplasm. Its function is as follows. Catalyzes the GTP-dependent ribosomal translocation step during translation elongation. During this step, the ribosome changes from the pre-translocational (PRE) to the post-translocational (POST) state as the newly formed A-site-bound peptidyl-tRNA and P-site-bound deacylated tRNA move to the P and E sites, respectively. Catalyzes the coordinated movement of the two tRNA molecules, the mRNA and conformational changes in the ribosome. The polypeptide is Elongation factor G (Variovorax paradoxus (strain S110)).